Reading from the N-terminus, the 231-residue chain is Elongation factor 1-delta 2 (231 aa).

A2 is modified (N-acetylalanine). A GST C-terminal domain is found at 11–73; sequence SGLKKLDEHL…LRISGVSAEG (63 aa). Positions 82-136 are disordered; that stretch reads SPITEEAVATPPAADSKDTAAEEEDDDDVDLFGEETEEEKKAAEERAASVKASTK. A compositionally biased stretch (acidic residues) spans 102–118; sequence AEEEDDDDVDLFGEETE. The segment covering 119–129 has biased composition (basic and acidic residues); that stretch reads EEKKAAEERAA.

This sequence belongs to the EF-1-beta/EF-1-delta family. EF-1 is composed of 4 subunits: alpha, beta (1B-alpha=beta'), delta (1B-beta), and gamma (1B-gamma).

EF-1-beta and EF-1-delta stimulate the exchange of GDP bound to EF-1-alpha to GTP. The protein is Elongation factor 1-delta 2 of Arabidopsis thaliana (Mouse-ear cress).